We begin with the raw amino-acid sequence, 139 residues long: Small ribosomal subunit protein eS6 (139 aa).

This sequence belongs to the eukaryotic ribosomal protein eS6 family.

The chain is Small ribosomal subunit protein eS6 from Methanosarcina barkeri (strain Fusaro / DSM 804).